We begin with the raw amino-acid sequence, 227 residues long: 7-cyano-7-deazaguanine synthase (227 aa).

Residue 8–18 coordinates ATP; it reads FSGGQDSTTCL. Cys-187, Cys-196, Cys-199, and Cys-202 together coordinate Zn(2+).

This sequence belongs to the QueC family. The cofactor is Zn(2+).

The catalysed reaction is 7-carboxy-7-deazaguanine + NH4(+) + ATP = 7-cyano-7-deazaguanine + ADP + phosphate + H2O + H(+). It functions in the pathway purine metabolism; 7-cyano-7-deazaguanine biosynthesis. Functionally, catalyzes the ATP-dependent conversion of 7-carboxy-7-deazaguanine (CDG) to 7-cyano-7-deazaguanine (preQ(0)). The chain is 7-cyano-7-deazaguanine synthase from Shewanella pealeana (strain ATCC 700345 / ANG-SQ1).